Here is a 642-residue protein sequence, read N- to C-terminus: Threonine--tRNA ligase (642 aa).

Residues 1 to 61 form the TGS domain; it reads MPVITLPDGS…ENDAQLSIIT (61 aa). Positions 243–534 are catalytic; the sequence is DHRKIGKQLD…LTEEFAGFFP (292 aa). Lysine 286 is modified (N6-acetyllysine). 3 residues coordinate Zn(2+): cysteine 334, histidine 385, and histidine 511.

The protein belongs to the class-II aminoacyl-tRNA synthetase family. As to quaternary structure, homodimer. Zn(2+) serves as cofactor.

It is found in the cytoplasm. The catalysed reaction is tRNA(Thr) + L-threonine + ATP = L-threonyl-tRNA(Thr) + AMP + diphosphate + H(+). In terms of biological role, catalyzes the attachment of threonine to tRNA(Thr) in a two-step reaction: L-threonine is first activated by ATP to form Thr-AMP and then transferred to the acceptor end of tRNA(Thr). Also edits incorrectly charged L-seryl-tRNA(Thr). The sequence is that of Threonine--tRNA ligase from Shigella flexneri serotype 5b (strain 8401).